A 45-amino-acid chain; its full sequence is Large ribosomal subunit protein bL36 (45 aa).

Positions 1 to 20 are disordered; it reads MKVSSSIKADPSKGDKLVRR.

This sequence belongs to the bacterial ribosomal protein bL36 family.

The polypeptide is Large ribosomal subunit protein bL36 (Chlamydia abortus (strain DSM 27085 / S26/3) (Chlamydophila abortus)).